The following is a 202-amino-acid chain: Small ribosomal subunit protein uS4c (202 aa).

An S4 RNA-binding domain is found at 90 to 158 (MRSDNVIFRL…ISKNIELYQK (69 aa)).

Belongs to the universal ribosomal protein uS4 family. Part of the 30S ribosomal subunit. Contacts protein S5. The interaction surface between S4 and S5 is involved in control of translational fidelity.

It is found in the plastid. Its subcellular location is the chloroplast. Functionally, one of the primary rRNA binding proteins, it binds directly to 16S rRNA where it nucleates assembly of the body of the 30S subunit. Its function is as follows. With S5 and S12 plays an important role in translational accuracy. The chain is Small ribosomal subunit protein uS4c (rps4) from Exsertotheca crispa (Moss).